The following is a 493-amino-acid chain: 3-octaprenyl-4-hydroxybenzoate carboxy-lyase (493 aa).

Residue Asn-172 coordinates Mn(2+). Prenylated FMN-binding positions include 175-177, 189-191, and 194-195; these read IYR, RWL, and RG. A Mn(2+)-binding site is contributed by Glu-238. Catalysis depends on Asp-287, which acts as the Proton donor.

Belongs to the UbiD family. As to quaternary structure, homohexamer. Prenylated FMN is required as a cofactor. Mn(2+) serves as cofactor.

It localises to the cell membrane. The enzyme catalyses a 4-hydroxy-3-(all-trans-polyprenyl)benzoate + H(+) = a 2-(all-trans-polyprenyl)phenol + CO2. It functions in the pathway cofactor biosynthesis; ubiquinone biosynthesis. In terms of biological role, catalyzes the decarboxylation of 3-octaprenyl-4-hydroxy benzoate to 2-octaprenylphenol, an intermediate step in ubiquinone biosynthesis. The chain is 3-octaprenyl-4-hydroxybenzoate carboxy-lyase from Shewanella loihica (strain ATCC BAA-1088 / PV-4).